The following is a 260-amino-acid chain: Phosphate import ATP-binding protein PstB (260 aa).

An ABC transporter domain is found at 13–255 (MRAQGVNVFY…PKQERTKDYI (243 aa)). Residue 45 to 52 (GPSGCGKS) coordinates ATP.

This sequence belongs to the ABC transporter superfamily. Phosphate importer (TC 3.A.1.7) family. The complex is composed of two ATP-binding proteins (PstB), two transmembrane proteins (PstC and PstA) and a solute-binding protein (PstS).

The protein resides in the cell inner membrane. It carries out the reaction phosphate(out) + ATP + H2O = ADP + 2 phosphate(in) + H(+). Functionally, part of the ABC transporter complex PstSACB involved in phosphate import. Responsible for energy coupling to the transport system. The chain is Phosphate import ATP-binding protein PstB from Sphingopyxis alaskensis (strain DSM 13593 / LMG 18877 / RB2256) (Sphingomonas alaskensis).